We begin with the raw amino-acid sequence, 83 residues long: Keratin-associated protein 6-1 (83 aa).

The stretch at 9-15 (YGGLGCG) is one RPT 1-1 repeat. The RPT 1-2 repeat unit spans residues 19-25 (YGGLGCG). The RPT 2-1 repeat unit spans residues 44–55 (GYGYGSRSLCGS). An RPT 2-2 repeat occupies 56 to 67 (GYGYGSRSLCGS).

This sequence belongs to the KRTAP type 6 family. In terms of assembly, interacts with wool keratins.

In terms of biological role, in the wool cortex, wool keratin intermediate filaments are embedded in an interfilamentous matrix, consisting of hair keratin-associated proteins (KRTAP), which are essential for the formation of a rigid and resistant wool shaft through their extensive disulfide bond cross-linking with abundant cysteine residues of wool keratins. The matrix proteins include the high-sulfur and high-glycine-tyrosine keratins. In Ovis aries (Sheep), this protein is Keratin-associated protein 6-1 (KRTAP6-1).